Reading from the N-terminus, the 203-residue chain is Snake venom metalloproteinase atroxase (203 aa).

At glutamate 1 the chain carries Pyrrolidone carboxylic acid (Glu). Asparagine 5 carries an N-linked (GlcNAc...) asparagine glycan. The region spanning 9 to 203 (RYIELVVVAD…KQYNPQIXNK (195 aa)) is the Peptidase M12B domain. Positions 12 and 96 each coordinate Ca(2+). Histidine 145 is a binding site for Zn(2+). The active site involves glutamate 146. Zn(2+)-binding residues include histidine 149 and histidine 155. Cysteines 160 and 167 form a disulfide. A Ca(2+)-binding site is contributed by asparagine 202.

The protein belongs to the venom metalloproteinase (M12B) family. P-I subfamily. Monomer. The cofactor is Zn(2+). Post-translationally, the N-terminus is blocked. In terms of tissue distribution, expressed by the venom gland.

It localises to the secreted. The catalysed reaction is Cleavage of 5-His-|-Leu-6, 9-Ser-|-His-10, 10-His-|-Leu-11, 14-Ala-|-Leu-15 and 16-Tyr-|-Leu-17 in insulin B chain.. With respect to regulation, inhibited by EDTA and alpha2-macroglobulin. In terms of biological role, snake venom zinc metalloprotease that has Aalpha, Bbeta fibrin(ogen)olytic activities. It cleaves the Aalpha chain of fibrinogen first followed by the Bbeta chain and shows no effect on the gamma chain. Does not induce or inhibit platelet aggregation, and is unable to activate plasminogen. Exhibits low lethality when tested on mice. Intravenous administration results in thrombolysis within one hour followed by recanalization. Fibrinogenolytic activity results in a 60% decrease in the rat's plasma fibrinogen level. Histological examination of kidney, liver, heart and lung tissue shows no necrosis nor hemorrhage. The polypeptide is Snake venom metalloproteinase atroxase (Crotalus atrox (Western diamondback rattlesnake)).